A 266-amino-acid polypeptide reads, in one-letter code: Small ribosomal subunit protein uS2 (266 aa).

Residues 229-254 form a disordered region; sequence RTSDKEADTTTEEVAQEEVTDTKADE. The segment covering 237–247 has biased composition (acidic residues); it reads TTTEEVAQEEV.

It belongs to the universal ribosomal protein uS2 family.

This is Small ribosomal subunit protein uS2 from Flavobacterium psychrophilum (strain ATCC 49511 / DSM 21280 / CIP 103535 / JIP02/86).